The sequence spans 312 residues: Cytochrome c biogenesis protein CcsA (312 aa).

8 helical membrane passes run 9–29, 44–64, 71–91, 111–131, 143–163, 216–236, 251–271, and 277–297; these read ILTH…LITF, GIIV…ISSG, LYES…IPYF, GFAT…VPAL, MILG…LLVI, VISL…VWAN, WAFI…NINL, and AIIA…VNLL.

It belongs to the CcmF/CycK/Ccl1/NrfE/CcsA family. As to quaternary structure, may interact with Ccs1.

The protein localises to the plastid. The protein resides in the chloroplast thylakoid membrane. In terms of biological role, required during biogenesis of c-type cytochromes (cytochrome c6 and cytochrome f) at the step of heme attachment. In Atropa belladonna (Belladonna), this protein is Cytochrome c biogenesis protein CcsA.